A 358-amino-acid polypeptide reads, in one-letter code: Alanine racemase (358 aa).

The active-site Proton acceptor; specific for D-alanine is the K35. K35 carries the N6-(pyridoxal phosphate)lysine modification. Residue R130 participates in substrate binding. Y255 serves as the catalytic Proton acceptor; specific for L-alanine. Residue M303 participates in substrate binding.

It belongs to the alanine racemase family. Pyridoxal 5'-phosphate serves as cofactor.

It carries out the reaction L-alanine = D-alanine. The protein operates within amino-acid biosynthesis; D-alanine biosynthesis; D-alanine from L-alanine: step 1/1. Its function is as follows. Catalyzes the interconversion of L-alanine and D-alanine. May also act on other amino acids. In Shewanella putrefaciens (strain CN-32 / ATCC BAA-453), this protein is Alanine racemase (alr).